Consider the following 76-residue polypeptide: MSKTITIADDVYYELVKMKGNKSFSELLRELIGKKKKGNLDILMIAFGTMSEEEVKEFKKKIKEVEEWINSWTPVS.

The protein belongs to the UPF0330 family.

Possibly the antitoxin component of a type II toxin-antitoxin (TA) system. Its cognate toxin is VapC2 (Potential). In Pyrococcus abyssi (strain GE5 / Orsay), this protein is Putative antitoxin VapB2 (vapB2).